A 277-amino-acid polypeptide reads, in one-letter code: Bifunctional protein FolD (277 aa).

NADP(+) is bound by residues 160–162, Ser185, and Ile226; that span reads GAS.

This sequence belongs to the tetrahydrofolate dehydrogenase/cyclohydrolase family. In terms of assembly, homodimer.

It catalyses the reaction (6R)-5,10-methylene-5,6,7,8-tetrahydrofolate + NADP(+) = (6R)-5,10-methenyltetrahydrofolate + NADPH. It carries out the reaction (6R)-5,10-methenyltetrahydrofolate + H2O = (6R)-10-formyltetrahydrofolate + H(+). The protein operates within one-carbon metabolism; tetrahydrofolate interconversion. In terms of biological role, catalyzes the oxidation of 5,10-methylenetetrahydrofolate to 5,10-methenyltetrahydrofolate and then the hydrolysis of 5,10-methenyltetrahydrofolate to 10-formyltetrahydrofolate. This Ruthia magnifica subsp. Calyptogena magnifica protein is Bifunctional protein FolD.